The primary structure comprises 152 residues: Putative RING finger protein 157L (152 aa).

The RING-type zinc finger occupies 111–146; it reads CVVCYENEICIKIQPCNHFVVCKSCFNRLNTCPMCR.

Belongs to the IIV-6 157L family.

This is Putative RING finger protein 157L from Invertebrate iridescent virus 6 (IIV-6).